Consider the following 292-residue polypeptide: Large ribosomal subunit protein uL18 (292 aa).

This sequence belongs to the universal ribosomal protein uL18 family. In terms of assembly, component of the large ribosomal subunit (LSU).

It is found in the cytoplasm. The protein resides in the nucleus. Functionally, component of the ribosome, a large ribonucleoprotein complex responsible for the synthesis of proteins in the cell. The small ribosomal subunit (SSU) binds messenger RNAs (mRNAs) and translates the encoded message by selecting cognate aminoacyl-transfer RNA (tRNA) molecules. The large subunit (LSU) contains the ribosomal catalytic site termed the peptidyl transferase center (PTC), which catalyzes the formation of peptide bonds, thereby polymerizing the amino acids delivered by tRNAs into a polypeptide chain. The nascent polypeptides leave the ribosome through a tunnel in the LSU and interact with protein factors that function in enzymatic processing, targeting, and the membrane insertion of nascent chains at the exit of the ribosomal tunnel. The protein is Large ribosomal subunit protein uL18 (rpl5) of Dictyostelium discoideum (Social amoeba).